Here is a 67-residue protein sequence, read N- to C-terminus: Conotoxin AbVIN (67 aa).

The N-terminal stretch at 1-17 is a signal peptide; the sequence is VIIIAVLFLTACQLIAT. Positions 18 to 40 are excised as a propeptide; sequence ASYARSERKHPDLRLSSRNSKLS. Disulfide bonds link Cys43–Cys57, Cys50–Cys61, and Cys56–Cys66.

This sequence belongs to the conotoxin O1 superfamily. In terms of tissue distribution, expressed by the venom duct.

The protein localises to the secreted. The chain is Conotoxin AbVIN from Conus abbreviatus (Abbreviated cone).